The sequence spans 404 residues: Dual-specificity RNA methyltransferase RlmN (404 aa).

E119 (proton acceptor) is an active-site residue. Positions 126–358 constitute a Radical SAM core domain; the sequence is VGRAGALCVS…NKAGYSSPIR (233 aa). An intrachain disulfide couples C133 to C369. Residues C140, C144, and C147 each coordinate [4Fe-4S] cluster. Residues 195 to 196, S227, 249 to 251, and N326 each bind S-adenosyl-L-methionine; these read GE and SLH. C369 functions as the S-methylcysteine intermediate in the catalytic mechanism.

It belongs to the radical SAM superfamily. RlmN family. [4Fe-4S] cluster serves as cofactor.

It localises to the cytoplasm. It catalyses the reaction adenosine(2503) in 23S rRNA + 2 reduced [2Fe-2S]-[ferredoxin] + 2 S-adenosyl-L-methionine = 2-methyladenosine(2503) in 23S rRNA + 5'-deoxyadenosine + L-methionine + 2 oxidized [2Fe-2S]-[ferredoxin] + S-adenosyl-L-homocysteine. The enzyme catalyses adenosine(37) in tRNA + 2 reduced [2Fe-2S]-[ferredoxin] + 2 S-adenosyl-L-methionine = 2-methyladenosine(37) in tRNA + 5'-deoxyadenosine + L-methionine + 2 oxidized [2Fe-2S]-[ferredoxin] + S-adenosyl-L-homocysteine. Its function is as follows. Specifically methylates position 2 of adenine 2503 in 23S rRNA and position 2 of adenine 37 in tRNAs. m2A2503 modification seems to play a crucial role in the proofreading step occurring at the peptidyl transferase center and thus would serve to optimize ribosomal fidelity. In Caulobacter sp. (strain K31), this protein is Dual-specificity RNA methyltransferase RlmN.